The sequence spans 231 residues: Ion-translocating oxidoreductase complex subunit E (231 aa).

6 helical membrane passes run 18-38 (ALVQ…ATNA), 39-59 (LGLG…ISTL), 63-83 (TPAE…VSAV), 86-106 (LINA…PLIV), 125-145 (ALSA…MFVL), and 182-202 (PFLL…MLAG).

Belongs to the NqrDE/RnfAE family. As to quaternary structure, the complex is composed of six subunits: RsxA, RsxB, RsxC, RsxD, RsxE and RsxG.

It is found in the cell inner membrane. Its function is as follows. Part of a membrane-bound complex that couples electron transfer with translocation of ions across the membrane. Required to maintain the reduced state of SoxR. The chain is Ion-translocating oxidoreductase complex subunit E from Shigella boydii serotype 18 (strain CDC 3083-94 / BS512).